Here is a 72-residue protein sequence, read N- to C-terminus: Toxin Acra II-2 (72 aa).

Residues 3–67 (VPGNYPLNTN…VWNAAKNYCK (65 aa)) enclose the LCN-type CS-alpha/beta domain. 3 cysteine pairs are disulfide-bonded: Cys-18/Cys-41, Cys-27/Cys-46, and Cys-31/Cys-48.

This sequence belongs to the long (3 C-C) scorpion toxin superfamily. Sodium channel inhibitor family. Beta subfamily. In terms of tissue distribution, expressed by the venom gland.

The protein localises to the secreted. Functionally, binds to sodium channels (Nav) and affects the channel activation process. The protein is Toxin Acra II-2 of Androctonus crassicauda (Arabian fat-tailed scorpion).